The primary structure comprises 377 residues: MSVSELKERHAVATETVNNLRDQLRQRRLQLLDTDVARYSAAQGRTRVSFGATDLVCCRTLQGHTGKVYSLDWTPERNRIVSASQDGRLIVWNALTSQKTHAIKLPCAWVMTCAFSPNGQSVACGGLDSVCSIFSLSSTADKDGTVPVSRMLTGHRGYVSCCQYVPNEDAHLITSSGDQTCILWDVTTGLKTSVFGGEFQSGHTADVLSVSISGSNPNWFISGSCDSTARLWDTRAASRAVRTFHGHEGDVNTVKFFPDGYRFGTGSDDGTCRLYDIRTGHQLQVYQPHGDGENGPVTSIAFSVSGRLLFAGYASNNTCYVWDTLLGEVVLDLGLQQDSHRNRISCLGLSADGSALCTGSWDSNLKIWAFGGHRRVI.

WD repeat units lie at residues Gly63 to Asn93, Leu105 to Ser135, Gly154 to Asp185, Gly202 to Asp233, Gly246 to Asp276, Gly292 to Asp323, and Ser339 to Ala369. 2 short sequence motifs (DWD box) span residues Phe220–Arg235 and Phe263–Arg278.

The protein belongs to the WD repeat G protein beta family. As to quaternary structure, g proteins are composed of 3 units, alpha, beta and gamma. Interacts with the gamma subunits GG1 and GG2. The dimers GB1-GG1 and GB1-GG2 interact with NDL1, NDL2 and NDL3. Interacts with WNK8. Interacts with XLG2. Interacts with RACK1A, RACK1B and RACK1C. Interacts with ZAR1 (via GBeta-binding domain). Expressed in seedlings (especially at the hypocotyl/root junction), roots, leaves (restricted to veins and guard cells), and flowers. Also present in hydathods. Expressed in guard cells, mesophyll tissue of cotyledons, trichomes and whole siliques, but not in seeds.

It is found in the cell membrane. It localises to the cytoplasm. The protein localises to the nucleus. In terms of biological role, guanine nucleotide-binding proteins (G proteins) are involved as a modulator or transducer in various transmembrane signaling systems. The beta and gamma chains are required for the GTPase activity, for replacement of GDP by GTP, and for G protein-effector interaction. The heterotrimeric G-protein controls defense responses to necrotrophic and vascular fungi probably by modulating cell wall-related genes expression (e.g. lower xylose content in cell walls); involved in resistance to fungal pathogens such as Alternaria brassicicola and Fusarium oxysporum. Modulates root architecture (e.g. lateral root formation). Acts with XGL3 in the positive regulation of root waving and root skewing. Involved in the asymmetric division of zygote and specification of apical and basal cell lineages. The sequence is that of Guanine nucleotide-binding protein subunit beta (GB1) from Arabidopsis thaliana (Mouse-ear cress).